The sequence spans 1851 residues: Protein lap4 (1851 aa).

LRR repeat units lie at residues 38-59 (TLEE…FFRL), 61-82 (RLRK…IQNF), 84-105 (NLVE…IKHL), 107-128 (SLQV…FSQL), 130-152 (NLTV…GSLT), 153-174 (QLES…ISQL), 176-197 (KLKR…LGYL), 199-220 (GLHE…LGLL), 222-243 (KLTY…ISGL), 245-267 (SLTD…AKLS), 268-289 (RLTI…LGNC), 291-312 (NMQE…IGQM), 314-335 (KLNN…IGQC), 337-358 (NLGV…LGNC), 360-382 (VLHV…VNLQ), and 383-403 (LKAV…QPDT). Disordered regions lie at residues 427–474 (PARD…KDLK), 584–641 (VGGS…VQHL), and 656–719 (SQER…PDNL). Serine 433 and serine 435 each carry phosphoserine. Positions 438–461 (FEEREPSRTVVKFSEEATQEKETP) are enriched in basic and acidic residues. Residues 471–492 (KDLKAKAQKLKVERSRNEEHAN) adopt a coiled-coil conformation. The span at 589 to 601 (EVQDDDEQEDEFE) shows a compositional bias: acidic residues. The segment covering 620 to 639 (RPPKLHRRDTPHHLKNKRVQ) has biased composition (basic residues). A compositionally biased stretch (polar residues) spans 656–672 (SQERNDTTPQHSLSGKV). The segment covering 676–686 (IEEEEQLEVEQ) has biased composition (acidic residues). Positions 677–693 (EEEEQLEVEQEQQQQQQ) form a coiled coil. A phosphoserine mark is found at serine 700, serine 702, and serine 705. In terms of domain architecture, PDZ 1 spans 731–818 (EIHIERTAAG…VLVLVVQREV (88 aa)). Residues serine 834 and serine 837 each carry the phosphoserine modification. The PDZ 2 domain occupies 929 to 1019 (HTTLIRDQIG…FVRLVLQREY (91 aa)). Residues serine 1031 and serine 1041 each carry the phosphoserine modification. A disordered region spans residues 1067–1150 (LATTTPTPKP…EAQPSSLRPL (84 aa)). Polar residues-rich tracts occupy residues 1080 to 1097 (ASIS…TNGF) and 1132 to 1149 (GSTT…SLRP). PDZ domains are found at residues 1239–1329 (EVVL…QHDP) and 1336–1428 (EVLL…CKGY). Positions 1448–1467 (NSSASCSGGSRQGSRASETG) are enriched in polar residues. Positions 1448–1485 (NSSASCSGGSRQGSRASETGSELSQSQSVSSLDHEEDE) are disordered. The span at 1468–1478 (SELSQSQSVSS) shows a compositional bias: low complexity. 3 positions are modified to phosphoserine: serine 1475, serine 1477, and serine 1478. Threonine 1599 is subject to Phosphothreonine. Over residues 1647-1669 (AESANSAGAPSPAVPASTPGSAP) the composition is skewed to low complexity. Disordered stretches follow at residues 1647–1751 (AESA…KVFS) and 1772–1851 (LRRD…VFRS). Positions 1725 to 1751 (VSDKKRFFESAMEDQHKPTQKTDKVFS) are enriched in basic and acidic residues. The stretch at 1753–1790 (LSKDEVEKLRQEEERKIATLRRDKNSRLLDAANDNIDK) forms a coiled coil. The segment covering 1807-1816 (DDNDDSDQEE) has biased composition (acidic residues). Over residues 1831 to 1851 (HFDDAEDMRNPLDEIEAVFRS) the composition is skewed to basic and acidic residues.

Belongs to the LAP (LRR and PDZ) protein family. In terms of tissue distribution, during germ band extension, expression of isoform A occurs predominantly in neuroblasts derived from the neuro-ectoderm and later is restricted to CNS neurons and pole cells. Isoform C is strongly expressed in PNS and a subset of CNS neurons. In the adult, expressed in third antennal segment and maxillary palps, major olfactory organs and in Johnstons organ in the second antennal segment. Expression is also observed in cortical regions of the brain. Isoforms expressed in epithelia are coexpressed with dlg1 throughout development.

It localises to the cytoplasm. It is found in the apicolateral cell membrane. The protein localises to the cell junction. The protein resides in the septate junction. Required for polarization of the embryonic, imaginal disk and follicular epithelia. Specifically restricts apical membrane determinants to the apical cell surface; acts to exclude crb from the basolateral domain and define adherens junction position. Regulates cellular growth and differentiation; acts as a tumor suppressor. Essential for odor guided behavior. This Drosophila melanogaster (Fruit fly) protein is Protein lap4.